A 493-amino-acid chain; its full sequence is MARPLPILGGILLSFSPPAEATAQYSIIPEPSRTELRQETAKTLQLLSDQEVPTLETDAYRLTVTPQGAHLASGGREGRIYGLATLRQLRDQLAGQPEGIPCGVITDKPRYPWRGLMVDPARHFIPAADLKKFVDMMAYYKFNRLHLHLTDNQGWRLPVPGYPKLKSVASRREESFGDGIPHEGMYTKQELKELVAYCAARGIDVIPEIDMPGHNQALHAAYPEFFCFPKPDMNVRTTAGNSKELVCPQKPEVWKFYASVFNELKDIFPSGIVHLGGDEAPTELWEKCPLCREARTRAAMKDEQEQMKAFFAKTAALLAKNGQTPQFWYEGNAGIYHPGETVYAWRQGQALQSIEKTKKAGLNLIMASSEYCYLDFPQIQGQRNWGWMKTTTLQKCYDLDPAFGKPEKEAGHIRGVHAPVWAERLPDLNHLLYRAYPRACAIAEAGWSPMGVRSWENFRRKLADHRQFILKRFNYDMERTQGNEPAFRWENNK.

The first 21 residues, 1-21 (MARPLPILGGILLSFSPPAEA), serve as a signal peptide directing secretion. R122 serves as a coordination point for substrate. Active-site charge relay system residues include D151 and H214. C227 and C247 together coordinate Zn(2+). D278 lines the substrate pocket. Residue E279 is the Charge relay system of the active site. Residues C288 and C291 each coordinate Zn(2+). Substrate is bound by residues W345, 373 to 375 (YLD), and 421 to 423 (WAE).

The protein belongs to the glycosyl hydrolase 20 family.

It catalyses the reaction Hydrolysis of terminal non-reducing N-acetyl-D-hexosamine residues in N-acetyl-beta-D-hexosaminides.. With respect to regulation, significantly inhibited by the addition of sodium dodecyl sulfate (SDS), but not by EDTA, urea, 2-mercaptoethanol or Triton X-100. Strongly inhibited by Cu2(+) ions, in case of which the activity is decreased by 70%. No significant inhibition with Al(3+), Fe(3+), Ca(2+), Cd(2+), Mg(2+), Mn(2+), Ni(2+) and Zn(2+) ions. Strongly inhibited by PugNAc (O-(2-acetamido-2-deoxy-D-glucopyranosylideneamino) N-phenylcarbamate) in the sub-micromolar concentration range. PugNAc at a concentration of 0.5 mM decreases the activity by 50% and the addition of 1 mM PugNAc fully inhibits the enzyme. No significant reduction in the activity by alkylation using N-ethylmaleimide or 2-iodoacetamide. Hydrolyzes terminal GlcNAc residues from terminally unbranched N-glycans and from chitobiose. Hydrolyzes beta-1,6-linked N-acetylglucosamine and beta-1,4-linked N-acetylgalactosamine from pNP-alpha-GalNAc[beta1,3Gal]beta1,6GlcNAc and pNP-beta-GlcNAc-beta1,4-GalNAc substrates, respectively, as well as beta-1,2-linked N-acetylglucosamine units from the non-reducing end of N-glycans. Hydrolyzes GlcNAc residues linked to alpha1,3- or alpha1,6-mannose branch, but has low activity on substrates with more than one GlcNAc residue on one of the mannose branches. Releases terminal GlcNAc moieties from the N-glycopeptide Gly-Glu-Asn-(GlcNAc2Man3GlcNAc2)-Arg with high efficiency. Has moderate hydrolytic activity on the chitobiose moiety of N-glycopeptide substrate Gly-Glu-Asn-(GlcNAc2)-Arg. Does not hydrolyze GlcNAc residues from N-glycan structures bearing a bisecting GlcNAc moiety (beta1,4-linked GlcNAc to the beta1,4-linked core mannose). Potentially capable of cleaving the specific glycoside linkages in the process of mucin degradation in human intestinal tract. Hydrolyzes synthetic substrate pNP-beta-GlcNAc with high activity and pNP-beta-GalNAc to a lesser extent. Does not hydrolyze pNP-beta-glucose, pNP-beta-galactose, pNP-alpha-glucose, pNP-alpha-galactose, pNP-alpha-GlcNAc or pNP-alpha-fucose. In Akkermansia muciniphila (strain ATCC BAA-835 / DSM 22959 / JCM 33894 / BCRC 81048 / CCUG 64013 / CIP 107961 / Muc), this protein is Beta-hexosaminidase Amuc_2018.